A 278-amino-acid polypeptide reads, in one-letter code: HTH-type transcriptional activator RhaS (278 aa).

In terms of domain architecture, HTH araC/xylS-type spans 174 to 272; it reads NQLLAWLEDH…DWSPRDIRQG (99 aa). 2 consecutive DNA-binding regions (H-T-H motif) follow at residues 191 to 212 and 239 to 262; these read EEVAAQFSLSLRTLHRQLKQQT and VTDIAFRCGFGDSNHFSTLFRREF.

As to quaternary structure, binds DNA as a dimer.

Its subcellular location is the cytoplasm. In terms of biological role, activates expression of the rhaBAD and rhaT operons. This chain is HTH-type transcriptional activator RhaS, found in Klebsiella pneumoniae (strain 342).